We begin with the raw amino-acid sequence, 127 residues long: MAKHRLQQVADTMQRVLGDVIQKELKDPRVGFATVTGVEVSADLQHAKVRISVMGSPEEREAAMAALQRARGFLRKRVAEEMSYMRFVPELHLIQDTSLDYTMHMDEVFRAIQHERLVNPPKLDDEQ.

The protein belongs to the RbfA family. As to quaternary structure, monomer. Binds 30S ribosomal subunits, but not 50S ribosomal subunits or 70S ribosomes.

It is found in the cytoplasm. Its function is as follows. One of several proteins that assist in the late maturation steps of the functional core of the 30S ribosomal subunit. Associates with free 30S ribosomal subunits (but not with 30S subunits that are part of 70S ribosomes or polysomes). Required for efficient processing of 16S rRNA. May interact with the 5'-terminal helix region of 16S rRNA. The polypeptide is Ribosome-binding factor A (Chloroflexus aurantiacus (strain ATCC 29366 / DSM 635 / J-10-fl)).